Here is a 157-residue protein sequence, read N- to C-terminus: Deoxyuridine 5'-triphosphate nucleotidohydrolase (157 aa).

Residues 73–75 (RSG), Asn86, and 90–92 (TID) contribute to the substrate site.

This sequence belongs to the dUTPase family. Mg(2+) serves as cofactor.

The enzyme catalyses dUTP + H2O = dUMP + diphosphate + H(+). Its pathway is pyrimidine metabolism; dUMP biosynthesis; dUMP from dCTP (dUTP route): step 2/2. This enzyme is involved in nucleotide metabolism: it produces dUMP, the immediate precursor of thymidine nucleotides and it decreases the intracellular concentration of dUTP so that uracil cannot be incorporated into DNA. In Azorhizobium caulinodans (strain ATCC 43989 / DSM 5975 / JCM 20966 / LMG 6465 / NBRC 14845 / NCIMB 13405 / ORS 571), this protein is Deoxyuridine 5'-triphosphate nucleotidohydrolase.